We begin with the raw amino-acid sequence, 446 residues long: Citrate/sodium symporter (446 aa).

Transmembrane regions (helical) follow at residues 23 to 43, 46 to 66, 79 to 99, 110 to 130, and 148 to 168; these read IFGM…LSHF, AIPT…AIFG, IGGA…AGIF, VMDK…GAIL, and ILAG…CFGI. Na(+) is bound by residues I181 and G183. Citrate contacts are provided by N186 and G187. 5 helical membrane passes run 213–233, 267–287, 289–309, 335–355, and 364–384; these read IAIL…LDMI, ETAV…VVAK, ILPS…LIVA, QLLW…QEII, and VIAA…GWLI. Residues M399 and N401 each coordinate Na(+). Citrate-binding residues include R402, G404, S405, and R428. The helical transmembrane segment at 425–445 threads the bilayer; the sequence is ISSRLGGGIVLVIASIVFSMM.

It belongs to the 2-hydroxycarboxylate transporter (2-HCT) (TC 2.A.24) family. As to quaternary structure, homodimer.

Its subcellular location is the cell inner membrane. The enzyme catalyses citrate(out) + 2 Na(+)(out) = citrate(in) + 2 Na(+)(in). Secondary active transporter that catalyzes the uptake of citrate across the membrane with the concomitant uptake of sodium. Is specific for citrate. In Salmonella dublin, this protein is Citrate/sodium symporter.